The following is a 79-amino-acid chain: D-alanyl carrier protein (79 aa).

Residues 1 to 76 form the Carrier domain; the sequence is MKEQIFDIIE…KIAARVQEKT (76 aa). Ser-34 carries the O-(pantetheine 4'-phosphoryl)serine modification.

This sequence belongs to the DltC family. 4'-phosphopantetheine is transferred from CoA to a specific serine of apo-DCP.

The protein localises to the cytoplasm. It participates in cell wall biogenesis; lipoteichoic acid biosynthesis. In terms of biological role, carrier protein involved in the D-alanylation of lipoteichoic acid (LTA). The loading of thioester-linked D-alanine onto DltC is catalyzed by D-alanine--D-alanyl carrier protein ligase DltA. The DltC-carried D-alanyl group is further transferred to cell membrane phosphatidylglycerol (PG) by forming an ester bond, probably catalyzed by DltD. D-alanylation of LTA plays an important role in modulating the properties of the cell wall in Gram-positive bacteria, influencing the net charge of the cell wall. In Lactococcus lactis subsp. cremoris (strain SK11), this protein is D-alanyl carrier protein.